The following is a 399-amino-acid chain: Glutathione-independent formaldehyde dehydrogenase (399 aa).

Cys-47 provides a ligand contact to Zn(2+). Positions 48, 49, and 52 each coordinate NAD(+). 6 residues coordinate Zn(2+): His-68, Cys-98, Cys-101, Cys-104, Cys-112, and Asp-170. Residues Val-198, Asp-218, Arg-223, Val-263, Arg-268, His-270, Pro-300, Leu-302, Gly-337, and Thr-339 each coordinate NAD(+).

It belongs to the zinc-containing alcohol dehydrogenase family. As to quaternary structure, homotetramer. Requires Zn(2+) as cofactor.

It carries out the reaction formaldehyde + NAD(+) + H2O = formate + NADH + 2 H(+). It catalyses the reaction acetaldehyde + NAD(+) + H2O = acetate + NADH + 2 H(+). The enzyme catalyses 2 formaldehyde + H2O = methanol + formate + H(+). With respect to regulation, inactivated by bipyridine and p-chloromercuribenzoate. Functionally, dehydrogenase that catalyzes the NAD(+)-dependent oxidation of formaldehyde and acetaldehyde, and, to a lesser extent, long-chain alcohols, but is inactive against propionaldehyde, butyraldehyde, methanol and ethanol. Can also catalyze the dismutation of a wide range of aldehydes such as formaldehyde. This chain is Glutathione-independent formaldehyde dehydrogenase, found in Pseudomonas putida (Arthrobacter siderocapsulatus).